Consider the following 731-residue polypeptide: DNA ligase (731 aa).

NAD(+) is bound by residues 47–51, 96–97, and Glu-133; these read DAEYD and SI. Catalysis depends on Lys-135, which acts as the N6-AMP-lysine intermediate. NAD(+) contacts are provided by Arg-156, Glu-192, Lys-313, and Lys-337. 4 residues coordinate Zn(2+): Cys-462, Cys-465, Cys-480, and Cys-486. Residues 645–731 form the BRCT domain; that stretch reads AATLPLAGMT…RGTPPNAGGA (87 aa).

Belongs to the NAD-dependent DNA ligase family. LigA subfamily. Mg(2+) serves as cofactor. Mn(2+) is required as a cofactor.

The catalysed reaction is NAD(+) + (deoxyribonucleotide)n-3'-hydroxyl + 5'-phospho-(deoxyribonucleotide)m = (deoxyribonucleotide)n+m + AMP + beta-nicotinamide D-nucleotide.. Its function is as follows. DNA ligase that catalyzes the formation of phosphodiester linkages between 5'-phosphoryl and 3'-hydroxyl groups in double-stranded DNA using NAD as a coenzyme and as the energy source for the reaction. It is essential for DNA replication and repair of damaged DNA. The protein is DNA ligase of Acidovorax sp. (strain JS42).